Consider the following 817-residue polypeptide: Leucine--tRNA ligase (817 aa).

The short motif at 42-52 (PYPSGRLHMGH) is the 'HIGH' region element. The 'KMSKS' region signature appears at 576–580 (KMSKS). Lys-579 contributes to the ATP binding site.

The protein belongs to the class-I aminoacyl-tRNA synthetase family.

It localises to the cytoplasm. It catalyses the reaction tRNA(Leu) + L-leucine + ATP = L-leucyl-tRNA(Leu) + AMP + diphosphate. This chain is Leucine--tRNA ligase, found in Thioalkalivibrio sulfidiphilus (strain HL-EbGR7).